A 679-amino-acid chain; its full sequence is Stress-70 protein, mitochondrial (679 aa).

The transit peptide at 1 to 46 (MISASRAVAARLVGAAASRGPTAARHQDGWNGLSHEAFRIVSRRDY) directs the protein to the mitochondrion. The segment at 1–432 (MISASRAVAA…IQGGVLAGDV (432 aa)) is interaction with NFS1. Threonine 63 and asparagine 64 together coordinate ADP. The segment at 63–431 (TNSCVAVMEG…AIQGGVLAGD (369 aa)) is nucleotide-binding domain (NBD). Lysine 76 bears the N6-acetyllysine mark. Threonine 87 is subject to Phosphothreonine. Lysine 135 and lysine 138 each carry N6-acetyllysine; alternate. 2 positions are modified to N6-succinyllysine; alternate: lysine 135 and lysine 138. Position 143 is an N6-acetyllysine (lysine 143). Residue lysine 206 is modified to N6-acetyllysine; alternate. Lysine 206 carries the post-translational modification N6-succinyllysine; alternate. Lysine 206 carries the N6-malonyllysine; alternate modification. Residues lysine 234 and lysine 288 each carry the N6-acetyllysine modification. At lysine 300 the chain carries N6-acetyllysine; alternate. Residue lysine 300 is modified to N6-succinyllysine; alternate. 3 residues coordinate ADP: glutamate 313, lysine 316, and serine 320. An N6-succinyllysine modification is found at lysine 368. Positions 388 and 391 each coordinate ADP. At lysine 394 the chain carries N6-succinyllysine. A Phosphoserine modification is found at serine 408. Residues 432–441 (VTDVLLLDVT) are interdomain linker. The segment at 432-679 (VTDVLLLDVT…QKEDQKEEKQ (248 aa)) is interaction with FXN and ISCU. The substrate-binding domain (SBD) stretch occupies residues 442–679 (PLSLGIETLG…QKEDQKEEKQ (238 aa)). An Omega-N-methylarginine modification is found at arginine 513. Residues lysine 567 and lysine 600 each carry the N6-acetyllysine; alternate modification. Lysine 567 and lysine 600 each carry N6-succinyllysine; alternate. At lysine 610 the chain carries N6-succinyllysine. Lysine 612 is modified (N6-acetyllysine). Lysine 646 bears the N6-acetyllysine; alternate mark. Lysine 646 bears the N6-succinyllysine; alternate mark. Positions 656–679 (ASEREGSGSSGTGEQKEDQKEEKQ) are disordered. The span at 669–679 (EQKEDQKEEKQ) shows a compositional bias: basic and acidic residues.

This sequence belongs to the heat shock protein 70 family. Interacts strongly with the intermediate form of FXN and weakly with its mature form. Interacts with HSCB. Associates with the mitochondrial contact site and cristae organizing system (MICOS) complex, composed of at least MICOS10/MIC10, CHCHD3/MIC19, CHCHD6/MIC25, APOOL/MIC27, IMMT/MIC60, APOO/MIC23/MIC26 and QIL1/MIC13. This complex was also known under the names MINOS or MitOS complex. The MICOS complex associates with mitochondrial outer membrane proteins SAMM50, MTX1, MTX2 and DNAJC11, mitochondrial inner membrane protein TMEM11 and with HSPA9. Interacts with DNLZ, the interaction is required to prevent self-aggregation. Interacts with TESPA1. Interacts with PDPN. Interacts with NFU1, NFS1 and ISCU. Interacts with TP53; the interaction promotes TP53 degradation. Interacts (via SBD domain) with UBXN2A; the interaction with UBXN2A inhibits HSPA9/MOT-2 interaction with and degradation of TP53, thereby promotes TP53 translocation to the nucleus. Interacts with ITPR1 AND VDAC1; this interaction couples ITPR1 to VDAC1. Component of the TIM23 mitochondrial inner membrane pre-sequence translocase complex.

It is found in the mitochondrion. It localises to the nucleus. Its subcellular location is the nucleolus. The protein localises to the cytoplasm. The protein resides in the mitochondrion matrix. The catalysed reaction is ATP + H2O = ADP + phosphate + H(+). The chaperone activity is regulated by ATP-induced allosteric coupling of the nucleotide-binding (NBD) and substrate-binding (SBD) domains. ATP binding in the nucleotide-binding pocket (NBP) leads to a conformational change in the NBD, which is transferred through the interdomain linker (IDL) to the substrate-binding domain (SBD). This elicits a reduced substrate affinity and a faster substrate exchange rate. Upon hydrolysis of ATP to ADP, the protein undergoes a conformational change that increases its affinity for substrate proteins. It cycles through repeated phases of ATP hydrolysis and nucleotide exchange, facilitating repeated cycles of substrate binding and release. Functions in collaboration with co-chaperones. Functions with the co-chaperone, DNLZ, to maintain solubility and regulate ATP hydrolysis. Nucleotide exchange factors, GRPEL1 and GRPEL2, accelerate nucleotide exchange. Functionally, mitochondrial chaperone that plays a key role in mitochondrial protein import, folding, and assembly. Plays an essential role in the protein quality control system, the correct folding of proteins, the re-folding of misfolded proteins, and the targeting of proteins for subsequent degradation. These processes are achieved through cycles of ATP binding, ATP hydrolysis, and ADP release, mediated by co-chaperones. In mitochondria, it associates with the TIM (translocase of the inner membrane) protein complex to assist in the import and folding of mitochondrial proteins. Plays an important role in mitochondrial iron-sulfur cluster (ISC) biogenesis, interacts with and stabilizes ISC cluster assembly proteins FXN, NFU1, NFS1 and ISCU. Regulates erythropoiesis via stabilization of ISC assembly. Regulates mitochondrial calcium-dependent apoptosis by coupling two calcium channels, ITPR1 and VDAC1, at the mitochondria-associated endoplasmic reticulum (ER) membrane to facilitate calcium transport from the ER lumen to the mitochondria intermembrane space, providing calcium for the downstream calcium channel MCU, which releases it into the mitochondrial matrix. Although primarily located in the mitochondria, it is also found in other cellular compartments. In the cytosol, it associates with proteins involved in signaling, apoptosis, or senescence. It may play a role in cell cycle regulation via its interaction with and promotion of degradation of TP53. May play a role in the control of cell proliferation and cellular aging. Protects against reactive oxygen species (ROS). Extracellular HSPA9 plays a cytoprotective role by preventing cell lysis following immune attack by the membrane attack complex by disrupting formation of the complex. The sequence is that of Stress-70 protein, mitochondrial from Pongo abelii (Sumatran orangutan).